Consider the following 473-residue polypeptide: MTRGRVIQVMGPVVDVKFENGHLPAIYNALKIQHQARNENEVDIDLTLEVALHLGDDTVRTIAMASTDGLIRGMEVVDTGAPISVPVGDVTLGRVFNVLGEPIDLQDDIPAEARRDPIHRPAPKFEELATEVEILETGIKVVDLLAPYIKGGKIGLFGGAGVGKTVLIQELIHNIAQEHGGISVFAGVGERTREGNDLYHEMKDSGVISKTAMVFGQMNEPPGARMRVALTGLTMAEYFRDEQGQDVLLFIDNIFRFTQAGSEVSALLGRMPSAVGYQPTLATEMGQLQERITSTSKGSITSIQAIYVPADDYTDPAPATTFSHLDATTNLERKLAEMGIYPAVDPLASTSRALAPEIVGEEHYQVARRVQQTLQRYKELQDIIAILGMDELSDEDKLVVHRARRIQFFLSQNFHVAEQFTGQPGSYVPVKETVRGFKEILDGKYDHLPEDAFRLVGRIEEVVEKAKAMGVEV.

Position 158–165 (158–165) interacts with ATP; the sequence is GGAGVGKT.

The protein belongs to the ATPase alpha/beta chains family. F-type ATPases have 2 components, CF(1) - the catalytic core - and CF(0) - the membrane proton channel. CF(1) has five subunits: alpha(3), beta(3), gamma(1), delta(1), epsilon(1). CF(0) has three main subunits: a(1), b(2) and c(9-12). The alpha and beta chains form an alternating ring which encloses part of the gamma chain. CF(1) is attached to CF(0) by a central stalk formed by the gamma and epsilon chains, while a peripheral stalk is formed by the delta and b chains.

Its subcellular location is the cell membrane. It catalyses the reaction ATP + H2O + 4 H(+)(in) = ADP + phosphate + 5 H(+)(out). In terms of biological role, produces ATP from ADP in the presence of a proton gradient across the membrane. The catalytic sites are hosted primarily by the beta subunits. In Geobacillus thermodenitrificans (strain NG80-2), this protein is ATP synthase subunit beta.